The following is a 405-amino-acid chain: Arginine biosynthesis bifunctional protein ArgJ (405 aa).

Residues Thr-167, Lys-190, Thr-201, Glu-281, Asn-400, and Ser-405 each coordinate substrate. Thr-201 acts as the Nucleophile in catalysis.

The protein belongs to the ArgJ family. In terms of assembly, heterotetramer of two alpha and two beta chains.

The protein resides in the cytoplasm. The enzyme catalyses N(2)-acetyl-L-ornithine + L-glutamate = N-acetyl-L-glutamate + L-ornithine. It catalyses the reaction L-glutamate + acetyl-CoA = N-acetyl-L-glutamate + CoA + H(+). The protein operates within amino-acid biosynthesis; L-arginine biosynthesis; L-ornithine and N-acetyl-L-glutamate from L-glutamate and N(2)-acetyl-L-ornithine (cyclic): step 1/1. It functions in the pathway amino-acid biosynthesis; L-arginine biosynthesis; N(2)-acetyl-L-ornithine from L-glutamate: step 1/4. In terms of biological role, catalyzes two activities which are involved in the cyclic version of arginine biosynthesis: the synthesis of N-acetylglutamate from glutamate and acetyl-CoA as the acetyl donor, and of ornithine by transacetylation between N(2)-acetylornithine and glutamate. The chain is Arginine biosynthesis bifunctional protein ArgJ from Nocardia farcinica (strain IFM 10152).